The chain runs to 211 residues: Small ribosomal subunit protein uS3 (211 aa).

One can recognise a KH type-2 domain in the interval 16-85 (IDEYFKTKLV…NPQIEVKQVE (70 aa)).

Belongs to the universal ribosomal protein uS3 family. In terms of assembly, part of the 30S ribosomal subunit.

Binds the lower part of the 30S subunit head. The sequence is that of Small ribosomal subunit protein uS3 from Methanococcus maripaludis (strain DSM 14266 / JCM 13030 / NBRC 101832 / S2 / LL).